Here is a 209-residue protein sequence, read N- to C-terminus: Large ribosomal subunit protein uL3 (209 aa).

The segment at 122–152 (AIKRHGQSRGPMSHGSRYHRRPGSMGPVDPN) is disordered.

The protein belongs to the universal ribosomal protein uL3 family. In terms of assembly, part of the 50S ribosomal subunit. Forms a cluster with proteins L14 and L19. Interacts with RNA helicase CshA.

Its function is as follows. One of the primary rRNA binding proteins, it binds directly near the 3'-end of the 23S rRNA, where it nucleates assembly of the 50S subunit. Strongly stimulates 23S rRNA precursor processing by mini-ribonuclease 3 (MrnC); 20-30% DMSO can replace L3, suggesting the protein may alter rRNA conformation. This is Large ribosomal subunit protein uL3 from Bacillus subtilis (strain 168).